The chain runs to 277 residues: GATA transcription factor 15 (277 aa).

Residues 52-94 are disordered; it reads AYDDHSTVTTSPSSPSSSSTGSVDCTLSLGTPSSRRAEPVAAA. Low complexity predominate over residues 58-74; that stretch reads TVTTSPSSPSSSSTGSV. A GATA-type zinc finger spans residues 154 to 179; it reads CANCGTASTPLWRNGPRGPKSLCNAC.

It belongs to the type IV zinc-finger family. Class B subfamily.

Probable transcription factor that regulates organogenesis during transition from the vegetative to the reproductive phase. Regulates the expression of CYP78A11/PLA1, HD3A and MADS1 during reproductive development in rice. May act upstream of CYP78A11/PLA1 during panicle development. Acts independently of the photoperiodic and gibberellin signaling pathways. This chain is GATA transcription factor 15, found in Oryza sativa subsp. indica (Rice).